Here is a 116-residue protein sequence, read N- to C-terminus: Large ribosomal subunit protein bL17 (116 aa).

It belongs to the bacterial ribosomal protein bL17 family. In terms of assembly, part of the 50S ribosomal subunit. Contacts protein L32.

In Chloroflexus aurantiacus (strain ATCC 29366 / DSM 635 / J-10-fl), this protein is Large ribosomal subunit protein bL17.